Reading from the N-terminus, the 188-residue chain is uncharacterized protein (188 aa).

This is an uncharacterized protein from Autographa californica nuclear polyhedrosis virus (AcMNPV).